A 59-amino-acid polypeptide reads, in one-letter code: uncharacterized protein (59 aa).

This is an uncharacterized protein from Acidianus convivator (ATV).